The primary structure comprises 613 residues: Zinc metalloproteinase-disintegrin-like MTP8 (613 aa).

Positions 1–20 (MIEVLLVTICFTVFPYQGSP) are cleaved as a signal peptide. The propeptide occupies 21 to 191 (IILESGNVND…DETIEKISQL (171 aa)). Residues 205–401 (KYIELYVVVD…VRPQCILNKP (197 aa)) enclose the Peptidase M12B domain. Glu-208 provides a ligand contact to Ca(2+). Asn-282 carries N-linked (GlcNAc...) asparagine glycosylation. Asp-292 serves as a coordination point for Ca(2+). Intrachain disulfides connect Cys-316–Cys-396, Cys-356–Cys-380, and Cys-358–Cys-363. His-341, His-345, and His-351 together coordinate Zn(2+). Cys-396, Asn-399, Asn-414, Phe-416, Glu-418, Glu-421, and Asp-424 together coordinate Ca(2+). One can recognise a Disintegrin domain in the interval 409–495 (PPVCGNYFVE…KCPTDSFQRN (87 aa)). 15 disulfide bridges follow: Cys-412-Cys-441, Cys-423-Cys-436, Cys-425-Cys-431, Cys-435-Cys-458, Cys-449-Cys-455, Cys-454-Cys-480, Cys-467-Cys-487, Cys-474-Cys-506, Cys-499-Cys-511, Cys-518-Cys-568, Cys-533-Cys-575, Cys-543-Cys-577, Cys-546-Cys-556, Cys-563-Cys-601, and Cys-595-Cys-606. A glycan (N-linked (GlcNAc...) asparagine) is linked at Asn-437. The D/ECD-tripeptide signature appears at 473 to 475 (DCD). Ca(2+) is bound by residues Asp-475, Leu-476, Glu-478, and Asp-490. Asn-550 and Asn-572 each carry an N-linked (GlcNAc...) asparagine glycan.

It belongs to the venom metalloproteinase (M12B) family. P-III subfamily. As to quaternary structure, monomer. Zn(2+) is required as a cofactor. Expressed by the venom gland.

The protein resides in the secreted. Snake venom zinc metalloproteinase that may impair hemostasis in the prey. In Drysdalia coronoides (White-lipped snake), this protein is Zinc metalloproteinase-disintegrin-like MTP8.